A 302-amino-acid chain; its full sequence is Phosphoribosylaminoimidazole-succinocarboxamide synthase (302 aa).

This sequence belongs to the SAICAR synthetase family.

It carries out the reaction 5-amino-1-(5-phospho-D-ribosyl)imidazole-4-carboxylate + L-aspartate + ATP = (2S)-2-[5-amino-1-(5-phospho-beta-D-ribosyl)imidazole-4-carboxamido]succinate + ADP + phosphate + 2 H(+). It functions in the pathway purine metabolism; IMP biosynthesis via de novo pathway; 5-amino-1-(5-phospho-D-ribosyl)imidazole-4-carboxamide from 5-amino-1-(5-phospho-D-ribosyl)imidazole-4-carboxylate: step 1/2. In Cupriavidus metallidurans (strain ATCC 43123 / DSM 2839 / NBRC 102507 / CH34) (Ralstonia metallidurans), this protein is Phosphoribosylaminoimidazole-succinocarboxamide synthase.